Here is a 120-residue protein sequence, read N- to C-terminus: DNA-directed RNA polymerase II subunit rpb11 (120 aa).

The protein belongs to the archaeal Rpo11/eukaryotic RPB11/RPC19 RNA polymerase subunit family. Component of the RNA polymerase II (Pol II) complex consisting of 12 subunits.

It is found in the nucleus. Its function is as follows. DNA-dependent RNA polymerase catalyzes the transcription of DNA into RNA using the four ribonucleoside triphosphates as substrates. Component of RNA polymerase II which synthesizes mRNA precursors and many functional non-coding RNAs. Pol II is the central component of the basal RNA polymerase II transcription machinery. It is composed of mobile elements that move relative to each other. RPB11 is part of the core element with the central large cleft. The polypeptide is DNA-directed RNA polymerase II subunit rpb11 (polr2j) (Dictyostelium discoideum (Social amoeba)).